We begin with the raw amino-acid sequence, 349 residues long: Very-long-chain 3-oxoacyl-CoA reductase (349 aa).

A helical membrane pass occupies residues 29-49 (AASLVFATGGLFLLSRGLSFL). Leu74, Asp129, Asp137, Asn156, Tyr223, Lys227, Val256, and Ser258 together coordinate NADP(+). Tyr223 acts as the Proton donor in catalysis. Lys227 serves as the catalytic Lowers pKa of active site Tyr.

This sequence belongs to the short-chain dehydrogenases/reductases (SDR) family.

The protein resides in the endoplasmic reticulum membrane. It catalyses the reaction a very-long-chain (3R)-3-hydroxyacyl-CoA + NADP(+) = a very-long-chain 3-oxoacyl-CoA + NADPH + H(+). It functions in the pathway lipid metabolism; fatty acid biosynthesis. In terms of biological role, component of the microsomal membrane bound fatty acid elongation system, which produces the 26-carbon very long-chain fatty acids (VLCFA) from palmitate. Catalyzes the reduction of the 3-ketoacyl-CoA intermediate that is formed in each cycle of fatty acid elongation. VLCFAs serve as precursors for ceramide and sphingolipids. The protein is Very-long-chain 3-oxoacyl-CoA reductase of Coccidioides immitis (strain RS) (Valley fever fungus).